The chain runs to 451 residues: MLFRSLVTYLSLVSSVLSIASIKVEGNAFWDSESGDRFYIRGVDYQPGGSSELEDPLADTNVCERDVKYFQELGINTIRVYSIDNTKNHTECMDTLAKAGIYVILDVNTPHSSITRSDAACSYNTDYLQEVFASIVEFAQFDNTLGFFAGNEVINDGPSLEAAPYVKAVVRDMKTFIKNRGFRTIPVGYSAASVDEYRLPSGLYFNCGDDDMARIDMYGINDYSWCGDASMTTSQYSQQMKDFANYTVPLFFSEFGCNAKRPRPFSEIEAIYSTEMSSVFSGGLVYEYSEEASNYGLVELKGDSVTTNDDFDNLKSQFEKTKNPSGDGGYLKSTGGNKCPPKSNIWNVTEEIPDTPKGALKYLKGLAEPTGHGFDAYVQGNCNAKGNNVDDTGNYTSSITASSRASPSQTSQVSSSSATSANSTSSKKNDAAVEGAGFLSVIALAAGIALL.

The N-terminal stretch at 1-18 (MLFRSLVTYLSLVSSVLS) is a signal peptide. Y81 contributes to the (1,3-beta-D-glucosyl)n binding site. N88 carries N-linked (GlcNAc...) asparagine glycosylation. Residues 108-116 (NTPHSSITR), N151, E152, and R198 each bind (1,3-beta-D-glucosyl)n. Residue E152 is the Proton donor of the active site. Residue N245 is glycosylated (N-linked (GlcNAc...) asparagine). E254 acts as the Nucleophile in catalysis. Y286 lines the (1,3-beta-D-glucosyl)n pocket. Residues 316 to 336 (SQFEKTKNPSGDGGYLKSTGG) are disordered. N-linked (GlcNAc...) asparagine glycans are attached at residues N347, N394, and N422. Residues 395 to 427 (YTSSITASSRASPSQTSQVSSSSATSANSTSSK) are disordered. Low complexity predominate over residues 396-426 (TSSITASSRASPSQTSQVSSSSATSANSTSS). D430 carries the GPI-anchor amidated aspartate lipid modification. A propeptide spans 431–451 (AAVEGAGFLSVIALAAGIALL) (removed in mature form).

This sequence belongs to the glycosyl hydrolase 72 family. The GPI-anchor is attached to the protein in the endoplasmic reticulum and serves to target the protein to the cell surface. There, the glucosamine-inositol phospholipid moiety is cleaved off and the GPI-modified mannoprotein is covalently attached via its lipidless GPI glycan remnant to the 1,6-beta-glucan of the outer cell wall layer.

The protein resides in the secreted. It is found in the cell wall. The protein localises to the membrane. Its function is as follows. Splits internally a 1,3-beta-glucan molecule and transfers the newly generated reducing end (the donor) to the non-reducing end of another 1,3-beta-glucan molecule (the acceptor) forming a 1,3-beta linkage, resulting in the elongation of 1,3-beta-glucan chains in the cell wall. Involved in cell wall biosynthesis and morphogenesis. Plays a key role in virulence. This is 1,3-beta-glucanosyltransferase PGA4 (PGA4) from Candida albicans (strain SC5314 / ATCC MYA-2876) (Yeast).